A 414-amino-acid polypeptide reads, in one-letter code: Arginine deiminase (414 aa).

The active-site Amidino-cysteine intermediate is Cys-402.

Belongs to the arginine deiminase family.

It is found in the cytoplasm. The enzyme catalyses L-arginine + H2O = L-citrulline + NH4(+). Its pathway is amino-acid degradation; L-arginine degradation via ADI pathway; carbamoyl phosphate from L-arginine: step 1/2. The polypeptide is Arginine deiminase (Oenococcus oeni (strain ATCC BAA-331 / PSU-1)).